A 25-amino-acid polypeptide reads, in one-letter code: Caerin-1.6 (25 aa).

Leucine 25 is subject to Leucine amide.

This sequence belongs to the frog skin active peptide (FSAP) family. Caerin subfamily. As to expression, expressed by the skin dorsal glands.

It localises to the secreted. Functionally, antimicrobial peptide. Adopts an alpha helical conformation which can disrupt bacterial membranes. Strongly inhibits the formation of NO by neuronal nitric oxide synthase (nNOS) at micromolar concentrations. Acts by a non-competitive mechanism, probably by binding to calcium/calmodulin and as a consequence blocking calmodulin attachment to nNOS. Its function is as follows. Does not show antimicrobial activity. The sequence is that of Caerin-1.6 from Ranoidea chloris (Red-eyed tree frog).